Consider the following 26-residue polypeptide: Conotoxin Eb6.18 (26 aa).

2 disulfides stabilise this stretch: cysteine 7–cysteine 18 and cysteine 13–cysteine 25.

It belongs to the conotoxin O1 superfamily. As to expression, expressed by the venom duct.

The protein localises to the secreted. The polypeptide is Conotoxin Eb6.18 (E1) (Conus ebraeus (Hebrew cone)).